The chain runs to 437 residues: Transcription factor E2F1 (437 aa).

Disordered regions lie at residues 42–87 (ASAP…GRPP) and 101–128 (LAES…KSRY). The interval 67–108 (ATPQAPRPTPSAPRPALGRPPVKRRLDLETDHQYLAESSGPA) is cyclin A:CDK2 binding. The interaction with BIRC2/c-IAP1 stretch occupies residues 89–191 (KRRLDLETDH…KKSKNHIQWL (103 aa)). Residues 110–194 (GRGRHPGKGV…KNHIQWLGSH (85 aa)) mediate DNA binding. Residues Lys-117, Lys-120, and Lys-125 each carry the N6-acetyllysine modification. A leucine-zipper region spans residues 153–174 (LNWAAEVLKVQKRRIYDITNVL). A DEF box motif is present at residues 158-194 (EVLKVQKRRIYDITNVLEGIQLIAKKSKNHIQWLGSH). Position 185 is an N6-methyllysine; by SETD7 (Lys-185). The required for interaction with TRIM28 stretch occupies residues 192–382 (GSHTTVGVGG…RLSPLVAADS (191 aa)). A dimerization region spans residues 195-284 (TTVGVGGRLE…AVDSSENFQI (90 aa)). The disordered stretch occupies residues 300–349 (EETVGGISPGKTPSQEVTSEEENRATDSATIVSPPPSSPPSSLTTDPSQS). Low complexity predominate over residues 339-349 (PSSLTTDPSQS). Position 364 is a phosphoserine; by CHEK2 (Ser-364). A transactivation region spans residues 368–437 (PVDEDRLSPL…DFGDLTPLDF (70 aa)). Ser-375 carries the phosphoserine modification. Position 403 is a phosphoserine; by GSK3-beta (Ser-403). Residues 409-426 (LDYHFGLEEGEGIRDLFD) are RB1 binding. Thr-433 bears the Phosphothreonine; by GSK3-beta mark.

This sequence belongs to the E2F/DP family. Component of the DRTF1/E2F transcription factor complex. Forms heterodimers with DP family members. The E2F1 complex binds specifically hypophosphorylated RB1, the interaction represses E2F1-driven transcription. During the cell cycle, RB1 becomes phosphorylated in mid-to-late G1 phase, detaches from the DRTF1/E2F complex, rendering E2F transcriptionally active. Viral oncoproteins, notably E1A, T-antigen and HPV E7, are capable of sequestering RB1, thus releasing the active complex. Interacts with TRRAP, which probably mediates its interaction with histone acetyltransferase complexes, leading to transcription activation. Binds TOPBP1 and EAPP. Interacts with ARID3A. Interacts with TRIM28; the interaction inhibits E2F1 acetylation through recruiting HDAC1 and represses its transcriptional activity. Interaction with KAT2B; the interaction acetylates E2F1 enhancing its DNA-binding and transcriptional activity. Interacts with BIRC2/c-IAP1 (via BIR domains). The complex TFDP1:E2F1 interacts with CEBPA; the interaction prevents CEBPA binding to target genes promoters and represses its transcriptional activity. Interacts with RRP1B. Interacts with HCFC1. Interacts with KMT2E; the interaction is probably indirect and is mediated via HCFC1. Interacts with DCAF5 and L3MBTL3; the interaction requires methylation at Lys-185 and is necessary to target E2F1 for ubiquitination by the CRL4-DCAF5 E3 ubiquitin ligase complex. In terms of assembly, (Microbial infection) Interacts with human cytomegalovirus/HHV-5 protein UL123. Post-translationally, phosphorylated by CDK2 and cyclin A-CDK2 in the S-phase. Phosphorylation at Ser-364 by CHEK2 stabilizes E2F1 upon DNA damage and regulates its effect on transcription and apoptosis. Phosphorylation at Ser-403 by GSK3B promotes interaction with USP11, leading to its deubiquitination and stabilization. Ubiquitinated via 'Lys-63'-linked ubiquitin, leading to its degradation. Deubiquitinated by USP11 following phosphorylation by GSK3B, promoting its stability. In terms of processing, acetylation stimulates DNA-binding. Enhanced under stress conditions such as DNA damage and inhibited by retinoblastoma protein RB1. Regulated by KAP1/TRIM28 which recruits HDAC1 to E2F1 resulting in deacetylation. Acetylated by P/CAF/KAT2B. Post-translationally, methylation at Lys-185 by SETD7 promotes E2F1 ubiquitin-dependent proteasomal degradation.

The protein resides in the nucleus. BIRC2/c-IAP1 stimulates its transcriptional activity. In terms of biological role, transcription activator that binds DNA cooperatively with DP proteins through the E2 recognition site, 5'-TTTC[CG]CGC-3' found in the promoter region of a number of genes whose products are involved in cell cycle regulation or in DNA replication. The DRTF1/E2F complex functions in the control of cell-cycle progression from G1 to S phase. E2F1 binds preferentially RB1 in a cell-cycle dependent manner. It can mediate both cell proliferation and TP53/p53-dependent apoptosis. Blocks adipocyte differentiation by binding to specific promoters repressing CEBPA binding to its target gene promoters. Directly activates transcription of PEG10. Positively regulates transcription of RRP1B. The chain is Transcription factor E2F1 from Homo sapiens (Human).